Reading from the N-terminus, the 102-residue chain is Secretoglobin family 1D member (102 aa).

An N-terminal signal peptide occupies residues 1 to 21 (MRLSVTALLVTLALCYYEANA). N-linked (GlcNAc...) asparagine glycosylation occurs at Asn-87.

The protein belongs to the secretoglobin family. Lipophilin subfamily.

The protein resides in the secreted. In terms of biological role, may bind androgens and other steroids. May be under transcriptional regulation of steroid hormones. The sequence is that of Secretoglobin family 1D member (SCGB1D) from Bos taurus (Bovine).